Reading from the N-terminus, the 268-residue chain is L-cystine-binding protein TcyA (268 aa).

The first 19 residues, 1-19, serve as a signal peptide directing secretion; that stretch reads MKKALLALFMVVSIAALAA. Cysteine 20 carries the N-palmitoyl cysteine lipid modification. The S-diacylglycerol cysteine moiety is linked to residue cysteine 20.

This sequence belongs to the bacterial solute-binding protein 3 family. In terms of assembly, the complex is composed of two ATP-binding proteins (TcyC), two transmembrane proteins (TcyB) and a solute-binding protein (TcyA).

Its subcellular location is the cell membrane. In terms of biological role, part of the ABC transporter complex TcyABC involved in L-cystine import. This Bacillus subtilis (strain 168) protein is L-cystine-binding protein TcyA (tcyA).